Here is a 180-residue protein sequence, read N- to C-terminus: Large ribosomal subunit protein uL6 (180 aa).

Belongs to the universal ribosomal protein uL6 family. In terms of assembly, part of the 50S ribosomal subunit.

In terms of biological role, this protein binds to the 23S rRNA, and is important in its secondary structure. It is located near the subunit interface in the base of the L7/L12 stalk, and near the tRNA binding site of the peptidyltransferase center. The polypeptide is Large ribosomal subunit protein uL6 (Clostridium botulinum (strain Alaska E43 / Type E3)).